A 927-amino-acid chain; its full sequence is Isoleucine--tRNA ligase (927 aa).

The short motif at 57–67 is the 'HIGH' region element; it reads PYANGHIHIGH. Glu561 is a binding site for L-isoleucyl-5'-AMP. The 'KMSKS' region signature appears at 602 to 606; sequence KMSKS. Lys605 contributes to the ATP binding site. Zn(2+) is bound by residues Cys897, Cys900, Cys917, and Cys920.

The protein belongs to the class-I aminoacyl-tRNA synthetase family. IleS type 1 subfamily. In terms of assembly, monomer. It depends on Zn(2+) as a cofactor.

The protein localises to the cytoplasm. It carries out the reaction tRNA(Ile) + L-isoleucine + ATP = L-isoleucyl-tRNA(Ile) + AMP + diphosphate. Functionally, catalyzes the attachment of isoleucine to tRNA(Ile). As IleRS can inadvertently accommodate and process structurally similar amino acids such as valine, to avoid such errors it has two additional distinct tRNA(Ile)-dependent editing activities. One activity is designated as 'pretransfer' editing and involves the hydrolysis of activated Val-AMP. The other activity is designated 'posttransfer' editing and involves deacylation of mischarged Val-tRNA(Ile). In Syntrophotalea carbinolica (strain DSM 2380 / NBRC 103641 / GraBd1) (Pelobacter carbinolicus), this protein is Isoleucine--tRNA ligase.